A 578-amino-acid chain; its full sequence is MLRVLLLGVLAPAGLGLPTPAQPQPRSSQCMEHDCFQLFRGPATFLAASQTCEGLGGHLMTVRSSVAADVISLLLSGDGGDGPRLWIGLQLRRGCSDPGQGGPLRGFQWVTGDNRTSYSRWARPHVGPAGPPCAPLCVAVSDAAAPAPGEPAWEEQRCAAEADGFLCEFHFAASCRPLLVDARAAAAAGVSVTYSTPFGARGADFQALPAGSSAAVAPFGVQLACAAPRGEAEARWGREAPGAWDCSVENGGCQRACSASAGAPRCLCPADTYLQADGRSCATFAEHSCHKLCEHFCIPNASVPGSYLCMCETGYQLAADQHRCEDVDDCIQVPSLCPQLCVNTRGAFECHCYPGYELVDNECVEPVDPCFGSKCEYQCQPVSQTDYRCICAEGFAPVPHDPHRCQMFCNQTACPADCDPNSPTSCQCPEGYILDDGFMCTDIDECENGECPEACRNLPGTYECICGPDSPLAGQVATDCGRIISDPDGDSDSGSGEPPVTPTPGVTPSPSPVGPVHSGVLIGISIASLSLVVALLALLCHLRKKQGAPRAELEYKCGAPAKEVVLQHVRTEQMPQKL.

An N-terminal signal peptide occupies residues 1–16; that stretch reads MLRVLLLGVLAPAGLG. Topologically, residues 17 to 518 are extracellular; it reads LPTPAQPQPR…SPSPVGPVHS (502 aa). One can recognise a C-type lectin domain in the interval 31 to 167; it reads MEHDCFQLFR…CAAEADGFLC (137 aa). An N-linked (GlcNAc...) asparagine glycan is attached at Asn114. 19 disulfides stabilise this stretch: Cys137–Cys158, Cys246–Cys257, Cys253–Cys266, Cys268–Cys281, Cys289–Cys297, Cys293–Cys309, Cys311–Cys324, Cys330–Cys341, Cys337–Cys350, Cys352–Cys363, Cys370–Cys379, Cys375–Cys389, Cys391–Cys405, Cys409–Cys414, Cys418–Cys426, Cys428–Cys440, Cys446–Cys455, Cys451–Cys464, and Cys466–Cys480. EGF-like domains are found at residues 242 to 282 and 285 to 325; these read GAWD…RSCA and AEHS…HRCE. N-linked (GlcNAc...) asparagine glycosylation occurs at Asn300. An EGF-like 3; calcium-binding domain is found at 326–364; sequence DVDDCIQVPSLCPQLCVNTRGAFECHCYPGYELVDNECV. Position 343 is a (3R)-3-hydroxyasparagine (Asn343). EGF-like domains are found at residues 366 to 406 and 405 to 441; these read PVDP…HRCQ and CQMF…FMCT. N-linked (GlcNAc...) asparagine glycosylation is present at Asn410. An EGF-like 6; calcium-binding domain is found at 442–481; the sequence is DIDECENGECPEACRNLPGTYECICGPDSPLAGQVATDCG. Positions 483-512 are disordered; sequence IISDPDGDSDSGSGEPPVTPTPGVTPSPSP. O-linked (Xyl...) (chondroitin sulfate) serine glycosylation is found at Ser493 and Ser495. Positions 499-512 are enriched in pro residues; it reads PVTPTPGVTPSPSP. A helical transmembrane segment spans residues 519 to 539; sequence GVLIGISIASLSLVVALLALL. Over 540–578 the chain is Cytoplasmic; it reads CHLRKKQGAPRAELEYKCGAPAKEVVLQHVRTEQMPQKL.

In terms of assembly, interacts with ITGAL, ITGAM and ITGB2. Interacts with thrombin/F2; this interaction switches the specificity of thrombin from a procoagulant to an anticoagulant and antifibrinolytic protease. Interacts with ANGP1 and ANGP2; these interactions significantly inhibit the generation of activated PC and TAFIa/CPB2 by the thrombin/thrombomodulin complex. Interacts with PF4; this interaction enhances generation of activated protein C. Interacts with HMGB1; this interaction inhibits HMGB1 inflammatory activity. In terms of processing, N-glycosylated. Post-translationally, the iron and 2-oxoglutarate dependent 3-hydroxylation of aspartate and asparagine is (R) stereospecific within EGF domains. Expressed in lung, liver, spleen, kidney, pancreas and lymph node. Low expression in heart, cerebrum, urinary bladder and uterus.

The protein localises to the membrane. Its function is as follows. Endothelial cell receptor that plays a critical role in regulating several physiological processes including hemostasis, coagulation, fibrinolysis, inflammation, and angiogenesis. Acts as a cofactor for thrombin activation of protein C/PROC on the surface of vascular endothelial cells leading to initiation of the activated protein C anticoagulant pathway. Also accelerates the activation of the plasma carboxypeptidase B2/CPB2, which catalyzes removal of C-terminal basic amino acids from its substrates including kinins or anaphylatoxins leading to fibrinolysis inhibition. Plays critical protective roles in changing the cleavage specificity of protease-activated receptor 1/PAR1, inhibiting endothelial cell permeability and inflammation. Suppresses inflammation distinctly from its anticoagulant cofactor activity by sequestering HMGB1 thereby preventing it from engaging cellular receptors such as RAGE and contributing to the inflammatory response. This Canis lupus familiaris (Dog) protein is Thrombomodulin (THBD).